The sequence spans 262 residues: 3-dehydro-D-guloside 4-epimerase (262 aa).

Residue Glu146 is the Proton donor/acceptor of the active site. Mn(2+)-binding residues include Glu146 and Asp179. Residue His182 coordinates substrate. His205 is a binding site for Mn(2+). Arg211 provides a ligand contact to substrate. The active-site Proton donor/acceptor is Glu240. Residue Glu240 participates in Mn(2+) binding.

It belongs to the hyi family. Mn(2+) serves as cofactor.

The catalysed reaction is a 3-dehydro-D-guloside = a 3-dehydro-D-glucoside. Its function is as follows. Catalyzes the epimerization at C4 of 3-dehydro-D-gulosides leading to 3-dehydro-D-glucosides. Probably functions in a metabolic pathway that transforms D-gulosides to D-glucosides. Can use methyl alpha-3-dehydro-D-glucoside and methyl beta-3-dehydro-D-glucoside as substrates in vitro. However, the actual specific physiological substrates for this metabolic pathway are unknown. Cannot act on D-psicose, D-fructose, D-tagatose, D-sorbose, L-xylulose, or L-ribulose. The chain is 3-dehydro-D-guloside 4-epimerase (ycjR) from Escherichia coli (strain K12).